Reading from the N-terminus, the 585-residue chain is Probable long-chain-fatty-acid--AMP ligase FadD30 (585 aa).

This sequence belongs to the ATP-dependent AMP-binding enzyme family.

It participates in lipid metabolism; fatty acid biosynthesis. Its function is as follows. Catalyzes the activation of long-chain fatty acids as acyl-adenylates (acyl-AMP), which are then transferred to a multifunctional polyketide synthase (PKS) for further chain extension. The sequence is that of Probable long-chain-fatty-acid--AMP ligase FadD30 (fadD30) from Mycobacterium tuberculosis (strain CDC 1551 / Oshkosh).